We begin with the raw amino-acid sequence, 513 residues long: Mannosyl-oligosaccharide alpha-1,2-mannosidase 1B (513 aa).

A signal peptide spans 1–21 (MHLPSLSLSLTALAIASPSAA). Asn97, Asn117, Asn150, Asn184, Asn251, Asn322, Asn348, and Asn368 each carry an N-linked (GlcNAc...) asparagine glycan. Cys334 and Cys363 form a disulfide bridge. The Proton donor role is filled by Glu377. Position 503 (Thr503) interacts with Ca(2+).

This sequence belongs to the glycosyl hydrolase 47 family. Monomer. Ca(2+) serves as cofactor. Requires Mg(2+) as cofactor.

It localises to the cytoplasmic vesicle lumen. The catalysed reaction is N(4)-(alpha-D-Man-(1-&gt;2)-alpha-D-Man-(1-&gt;2)-alpha-D-Man-(1-&gt;3)-[alpha-D-Man-(1-&gt;2)-alpha-D-Man-(1-&gt;3)-[alpha-D-Man-(1-&gt;2)-alpha-D-Man-(1-&gt;6)]-alpha-D-Man-(1-&gt;6)]-beta-D-Man-(1-&gt;4)-beta-D-GlcNAc-(1-&gt;4)-beta-D-GlcNAc)-L-asparaginyl-[protein] (N-glucan mannose isomer 9A1,2,3B1,2,3) + 4 H2O = N(4)-(alpha-D-Man-(1-&gt;3)-[alpha-D-Man-(1-&gt;3)-[alpha-D-Man-(1-&gt;6)]-alpha-D-Man-(1-&gt;6)]-beta-D-Man-(1-&gt;4)-beta-D-GlcNAc-(1-&gt;4)-beta-D-GlcNAc)-L-asparaginyl-[protein] (N-glucan mannose isomer 5A1,2) + 4 beta-D-mannose. It catalyses the reaction N(4)-(alpha-D-Man-(1-&gt;2)-alpha-D-Man-(1-&gt;2)-alpha-D-Man-(1-&gt;3)-[alpha-D-Man-(1-&gt;3)-[alpha-D-Man-(1-&gt;2)-alpha-D-Man-(1-&gt;6)]-alpha-D-Man-(1-&gt;6)]-beta-D-Man-(1-&gt;4)-beta-D-GlcNAc-(1-&gt;4)-beta-D-GlcNAc)-L-asparaginyl-[protein] (N-glucan mannose isomer 8A1,2,3B1,3) + 3 H2O = N(4)-(alpha-D-Man-(1-&gt;3)-[alpha-D-Man-(1-&gt;3)-[alpha-D-Man-(1-&gt;6)]-alpha-D-Man-(1-&gt;6)]-beta-D-Man-(1-&gt;4)-beta-D-GlcNAc-(1-&gt;4)-beta-D-GlcNAc)-L-asparaginyl-[protein] (N-glucan mannose isomer 5A1,2) + 3 beta-D-mannose. It functions in the pathway protein modification; protein glycosylation. In terms of biological role, involved in the maturation of Asn-linked oligosaccharides. Progressively trims alpha-1,2-linked mannose residues from Man(9)GlcNAc(2) to produce Man(5)GlcNAc(2). This is Mannosyl-oligosaccharide alpha-1,2-mannosidase 1B (mns1B) from Aspergillus phoenicis (Aspergillus saitoi).